The chain runs to 393 residues: Formate-dependent phosphoribosylglycinamide formyltransferase (393 aa).

N(1)-(5-phospho-beta-D-ribosyl)glycinamide-binding positions include 22 to 23 (EL) and E82. ATP contacts are provided by residues R114, K155, 160-165 (SSGKGQ), 195-198 (EGFI), and E203. An ATP-grasp domain is found at 119–308 (RLAAEELGLP…EFALHARAIL (190 aa)). Mg(2+)-binding residues include E267 and E279. Residues D286, K356, and 363–364 (RR) contribute to the N(1)-(5-phospho-beta-D-ribosyl)glycinamide site.

Belongs to the PurK/PurT family. Homodimer.

It catalyses the reaction N(1)-(5-phospho-beta-D-ribosyl)glycinamide + formate + ATP = N(2)-formyl-N(1)-(5-phospho-beta-D-ribosyl)glycinamide + ADP + phosphate + H(+). Its pathway is purine metabolism; IMP biosynthesis via de novo pathway; N(2)-formyl-N(1)-(5-phospho-D-ribosyl)glycinamide from N(1)-(5-phospho-D-ribosyl)glycinamide (formate route): step 1/1. Involved in the de novo purine biosynthesis. Catalyzes the transfer of formate to 5-phospho-ribosyl-glycinamide (GAR), producing 5-phospho-ribosyl-N-formylglycinamide (FGAR). Formate is provided by PurU via hydrolysis of 10-formyl-tetrahydrofolate. In Azotobacter vinelandii (strain DJ / ATCC BAA-1303), this protein is Formate-dependent phosphoribosylglycinamide formyltransferase.